Consider the following 352-residue polypeptide: UDP-N-acetylglucosamine--N-acetylmuramyl-(pentapeptide) pyrophosphoryl-undecaprenol N-acetylglucosamine transferase 3 (352 aa).

UDP-N-acetyl-alpha-D-glucosamine contacts are provided by residues 11–13, Arg164, Ser194, and Gln289; that span reads SAG.

The protein belongs to the glycosyltransferase 28 family. MurG subfamily.

Its subcellular location is the cell membrane. The catalysed reaction is di-trans,octa-cis-undecaprenyl diphospho-N-acetyl-alpha-D-muramoyl-L-alanyl-D-glutamyl-meso-2,6-diaminopimeloyl-D-alanyl-D-alanine + UDP-N-acetyl-alpha-D-glucosamine = di-trans,octa-cis-undecaprenyl diphospho-[N-acetyl-alpha-D-glucosaminyl-(1-&gt;4)]-N-acetyl-alpha-D-muramoyl-L-alanyl-D-glutamyl-meso-2,6-diaminopimeloyl-D-alanyl-D-alanine + UDP + H(+). The protein operates within cell wall biogenesis; peptidoglycan biosynthesis. Its function is as follows. Cell wall formation. Catalyzes the transfer of a GlcNAc subunit on undecaprenyl-pyrophosphoryl-MurNAc-pentapeptide (lipid intermediate I) to form undecaprenyl-pyrophosphoryl-MurNAc-(pentapeptide)GlcNAc (lipid intermediate II). The chain is UDP-N-acetylglucosamine--N-acetylmuramyl-(pentapeptide) pyrophosphoryl-undecaprenol N-acetylglucosamine transferase 3 from Bacillus thuringiensis (strain Al Hakam).